The primary structure comprises 88 residues: Small ribosomal subunit protein bS20 (88 aa).

This sequence belongs to the bacterial ribosomal protein bS20 family.

In terms of biological role, binds directly to 16S ribosomal RNA. This is Small ribosomal subunit protein bS20 from Bartonella quintana (strain Toulouse) (Rochalimaea quintana).